The chain runs to 160 residues: Transcription elongation factor GreA (160 aa).

Residues 1–31 (MAEKTYPMTLEEKEKLEKELEELKLVRRPEI) adopt a coiled-coil conformation.

This sequence belongs to the GreA/GreB family.

In terms of biological role, necessary for efficient RNA polymerase transcription elongation past template-encoded arresting sites. The arresting sites in DNA have the property of trapping a certain fraction of elongating RNA polymerases that pass through, resulting in locked ternary complexes. Cleavage of the nascent transcript by cleavage factors such as GreA or GreB allows the resumption of elongation from the new 3'terminus. GreA releases sequences of 2 to 3 nucleotides. The protein is Transcription elongation factor GreA of Streptococcus suis (strain 98HAH33).